The following is a 327-amino-acid chain: Embigin (327 aa).

A signal peptide spans 1-32 (MRALPGLLEARARTPRLLLLQCLLAAARPSSA). At 33 to 260 (DGSAPDSPFT…ELVVLSYLVP (228 aa)) the chain is on the extracellular side. 9 N-linked (GlcNAc...) asparagine glycosylation sites follow: asparagine 54, asparagine 61, asparagine 75, asparagine 85, asparagine 100, asparagine 189, asparagine 196, asparagine 213, and asparagine 218. 2 consecutive Ig-like V-type domains span residues 71-158 (PVEK…NFKV) and 159-253 (PELH…IELV). 2 disulfide bridges follow: cysteine 88-cysteine 142 and cysteine 180-cysteine 237. Residues 261–281 (LKPFLVIVAEVILLVATILLC) traverse the membrane as a helical segment. The Cytoplasmic segment spans residues 282 to 327 (EKYTQKKKKHSDEGKEFEQIEQLKSDDSNGIENNVPRHRKNESLGQ). Residues 287–327 (KKKKHSDEGKEFEQIEQLKSDDSNGIENNVPRHRKNESLGQ) form a disordered region. Basic and acidic residues predominate over residues 291–308 (HSDEGKEFEQIEQLKSDD). A Phosphoserine modification is found at serine 309.

Interacts with SLC16A1, SLC16A6 and SLC16A7.

It localises to the cell membrane. The protein resides in the synapse. In terms of biological role, plays a role in the outgrowth of motoneurons and in the formation of neuromuscular junctions. Following muscle denervation, promotes nerve terminal sprouting and the formation of additional acetylcholine receptor clusters at synaptic sites without affecting terminal Schwann cell number or morphology. Delays the retraction of terminal sprouts following re-innervation of denervated endplates. May play a role in targeting the monocarboxylate transporters SLC16A1, SLC16A6 and SLC16A7 to the cell membrane. In Homo sapiens (Human), this protein is Embigin (EMB).